A 374-amino-acid chain; its full sequence is Type IV secretion system protein PtlG homolog (374 aa).

A helical membrane pass occupies residues 38–56 (WMFALVAVALSCLLATGIW). The disordered stretch occupies residues 87 to 116 (PREPEPAPLPDMPAAPNPILPQPRPAPPVP). The segment covering 92-116 (PAPLPDMPAAPNPILPQPRPAPPVP) has biased composition (pro residues).

The protein belongs to the TrbI/VirB10 family.

Its subcellular location is the cell membrane. The protein is Type IV secretion system protein PtlG homolog (ptlG) of Bordetella parapertussis (strain 12822 / ATCC BAA-587 / NCTC 13253).